The following is a 339-amino-acid chain: Fructose-1,6-bisphosphatase, cytosolic (339 aa).

Mg(2+) contacts are provided by E71, E100, D121, L123, and D124. Substrate contacts are provided by residues 124–127, N215, Y247, Y267, and K277; that span reads DGSS. E283 lines the Mg(2+) pocket.

The protein belongs to the FBPase class 1 family. Mg(2+) is required as a cofactor.

It is found in the cytoplasm. The enzyme catalyses beta-D-fructose 1,6-bisphosphate + H2O = beta-D-fructose 6-phosphate + phosphate. In Oryza sativa subsp. indica (Rice), this protein is Fructose-1,6-bisphosphatase, cytosolic.